The following is a 287-amino-acid chain: Outer membrane protein TP0453 (287 aa).

The first 24 residues, 1–24, serve as a signal peptide directing secretion; it reads MIRRRYRGCTQGAWIVSVGMLFAS. Cys-25 carries the N-palmitoyl cysteine lipid modification. Cys-25 is lipidated: S-diacylglycerol cysteine. Amphipathic helix regions lie at residues 36–40, 56–63, 69–77, 103–112, 155–162, 172–179, 194–202, 240–250, and 270–279; these read PLGVV, ENLISRII, KADIKKIVD, YAFTNLIFSR, MSKMLSRL, PRFEKECT, GGHFITKLL, FPIQFLISRVL, and AERLASVISS.

As to quaternary structure, a mix of monomer and dimers; may integrate into the membrane as a dimer. Palmitoylated upon expression of a fusion protein with first 46 residues fused to PhoA in E.coli.

It is found in the cell outer membrane. Might be involved in ligand transport, alters membrane permeability at acidic pH (4.0 to 5.5). Incubation of the non-lipidated form with lipid vesicles increases their permeability. The polypeptide is Outer membrane protein TP0453 (Treponema pallidum (strain Nichols)).